The following is a 275-amino-acid chain: Stage 0 sporulation protein YaaT (275 aa).

The 86-residue stretch at 61 to 146 (RKVIRVADDR…FKTRIELRQI (86 aa)) folds into the PSP1 C-terminal domain.

Its subcellular location is the cytoplasm. Functionally, essential for the phosphorelay during initiation of sporulation. May control the level of phosphorylated spo0A through spo0E activity during sporulation. This Bacillus subtilis (strain 168) protein is Stage 0 sporulation protein YaaT (yaaT).